We begin with the raw amino-acid sequence, 263 residues long: Chymotrypsinogen B (263 aa).

A signal peptide spans 1-18; that stretch reads MASLWLLSCFSLVGAAFG. 5 disulfides stabilise this stretch: Cys-19-Cys-140, Cys-60-Cys-76, Cys-154-Cys-219, Cys-186-Cys-200, and Cys-209-Cys-238. The region spanning 34–261 is the Peptidase S1 domain; that stretch reads IVNGEDAVPG…LIPWVQKILA (228 aa). His-75 (charge relay system) is an active-site residue. Ser-93 bears the Phosphoserine mark. Asp-120 functions as the Charge relay system in the catalytic mechanism. The active-site Charge relay system is Ser-213.

The protein belongs to the peptidase S1 family.

Its subcellular location is the secreted. The protein resides in the extracellular space. It catalyses the reaction Preferential cleavage: Tyr-|-Xaa, Trp-|-Xaa, Phe-|-Xaa, Leu-|-Xaa.. The sequence is that of Chymotrypsinogen B from Homo sapiens (Human).